A 242-amino-acid polypeptide reads, in one-letter code: Protein HTATIP2 (242 aa).

Residue A2 is modified to N-acetylalanine. Residues 2–25 form a required for interaction with elongation factor EEF1A1 region; the sequence is AETEALSKLREDFRMQNKSVFILG. 11 residues coordinate NADPH: S27, G28, E29, T30, R52, R53, L92, G93, Y143, K147, and R178. Catalysis depends on Y143, which acts as the Proton acceptor. K147 is a catalytic residue.

Monomer. Forms homodimers during oxidative stress. Interacts (via N-terminus) with elongation factor EEF1A1 (via middle-region); the interaction is direct and competes with EEF1A1 binding to guanyl-nucleotide exchange factor EEF1B2, thereby inhibiting GDP for GTP exchange and reactivation of EEF1A1. Interacts with nuclear transport receptors XPO4, IPO5/RANBP5, IPO7, IPO9 and KPNB1 as well as GCN1L1/GCN1 and LRPPRC probably through their HEAT repeats. Binds NCOA5/CIA.

It localises to the cytoplasm. In terms of biological role, represses translation by preventing reactivation of elongation factor eEF1A. May also inhibit nuclear import by competing with nuclear import substrates for binding to a subset of nuclear transport receptors. Has additionally been proposed to act as a redox sensor involved in cellular oxidative stress surveillance. The chain is Protein HTATIP2 (HTATIP2) from Pan paniscus (Pygmy chimpanzee).